The chain runs to 86 residues: Neurotoxin E1x (86 aa).

The first 19 residues, 1 to 19 (MNSLLMITACLVVIGTVWA), serve as a signal peptide directing secretion. An LCN-type CS-alpha/beta domain is found at 20–84 (KEGYLVDVKG…TWPLPNKTCG (65 aa)). 4 disulfide bridges follow: Cys30-Cys83, Cys34-Cys59, Cys43-Cys64, and Cys47-Cys66. Cys83 carries the post-translational modification Cysteine amide.

Belongs to the long (4 C-C) scorpion toxin superfamily. Sodium channel inhibitor family. Beta subfamily. As to expression, expressed by the venom gland.

The protein localises to the secreted. Functionally, binds to sodium channels (Nav) and inhibits the inactivation of the activated channels, thereby blocking neuronal transmission. The sequence is that of Neurotoxin E1x from Centruroides sculpturatus (Arizona bark scorpion).